We begin with the raw amino-acid sequence, 469 residues long: MLSLPLLLLLLWGMGSHSFPTVPSETREEDVEMVQKYLENYYNLKSDGEQIEKQRHRSPVVEKLKQMQEFFGLKVTGKPDAETLNVMKQPRCGVPDVAEFVLTEGNPRWENTHLTYRIENYTPDLPRADVDQAIEKAFQLWSNVSPLTFTKVSEGQADIMISFVRGDHRDNSPFDGPGGNLAHAFQPGPRIGGDAHFDEDETWTSNFRNYNLYRVAAHEFGHSLGLSHSTDIGALMYPNYFFTGDVQLSQDDINGIQAIYGPSQNPIQPIGPQTPEVCDSKLTFDAITTIRGEVMFFKDRFYMRINPYYPEAELNFISIFWPQLPNGLQAAYEVSHRDEVRFFKGNKYWAVKGQDVLYGYPKDIHRSFGFPSTVKNIDAAVSEEDTGKTYFFVADKYWRYDEYKRSMDAGYPKMIADDFPGIGDKVDAVFQKDGFFYFFHGTRQYKFDPKTKRILTLQKANSWFNCRKN.

The N-terminal stretch at 1–18 (MLSLPLLLLLLWGMGSHS) is a signal peptide. Positions 19–99 (FPTVPSETRE…PRCGVPDVAE (81 aa)) are cleaved as a propeptide — activation peptide. Residues 90–97 (PRCGVPDV) carry the Cysteine switch motif. Cysteine 92 contacts Zn(2+). Residues aspartate 124 and aspartate 158 each contribute to the Ca(2+) site. Zn(2+)-binding residues include histidine 168 and aspartate 170. 4 residues coordinate Ca(2+): aspartate 175, glycine 176, glycine 178, and asparagine 180. Histidine 183 lines the Zn(2+) pocket. Residues arginine 190, glycine 192, and aspartate 194 each contribute to the Ca(2+) site. Residue histidine 196 participates in Zn(2+) binding. Residues aspartate 198, glutamate 199, and glutamate 201 each contribute to the Ca(2+) site. Histidine 218 contacts Zn(2+). The active site involves glutamate 219. Zn(2+)-binding residues include histidine 222 and histidine 228. Threonine 274 is modified (phosphothreonine). Hemopexin repeat units lie at residues 275-324 (PEVC…WPQL), 325-371 (PNGL…FGFP), 374-422 (VKNI…FPGI), and 423-466 (GDKV…WFNC). An intrachain disulfide couples cysteine 278 to cysteine 466. 2 residues coordinate Ca(2+): aspartate 285 and glutamine 329. Tyrosine 360 bears the Phosphotyrosine; by PKDCC mark. 2 residues coordinate Ca(2+): aspartate 378 and aspartate 427.

It belongs to the peptidase M10A family. Ca(2+) serves as cofactor. Requires Zn(2+) as cofactor. Post-translationally, tyrosine phosphorylated in platelets by PKDCC/VLK.

The protein localises to the secreted. It localises to the extracellular space. It is found in the extracellular matrix. It catalyses the reaction Cleavage of the triple helix of collagen at about three-quarters of the length of the molecule from the N-terminus, at 775-Gly-|-Ile-776 in the alpha1(I) chain. Cleaves synthetic substrates and alpha-macroglobulins at bonds where P1' is a hydrophobic residue.. Can be activated without removal of the activation peptide. In terms of biological role, cleaves collagens of types I, II, and III at one site in the helical domain. Also cleaves collagens of types VII and X. The sequence is that of Interstitial collagenase (MMP1) from Equus caballus (Horse).